The following is a 244-amino-acid chain: Phosphoribosyl isomerase A (244 aa).

The active-site Proton acceptor is the D10. D129 functions as the Proton donor in the catalytic mechanism.

This sequence belongs to the HisA/HisF family.

The protein localises to the cytoplasm. The catalysed reaction is 1-(5-phospho-beta-D-ribosyl)-5-[(5-phospho-beta-D-ribosylamino)methylideneamino]imidazole-4-carboxamide = 5-[(5-phospho-1-deoxy-D-ribulos-1-ylimino)methylamino]-1-(5-phospho-beta-D-ribosyl)imidazole-4-carboxamide. The enzyme catalyses N-(5-phospho-beta-D-ribosyl)anthranilate = 1-(2-carboxyphenylamino)-1-deoxy-D-ribulose 5-phosphate. Its pathway is amino-acid biosynthesis; L-histidine biosynthesis; L-histidine from 5-phospho-alpha-D-ribose 1-diphosphate: step 4/9. The protein operates within amino-acid biosynthesis; L-tryptophan biosynthesis; L-tryptophan from chorismate: step 3/5. Its function is as follows. Involved in both the histidine and tryptophan biosynthetic pathways. The protein is Phosphoribosyl isomerase A of Mycobacterium ulcerans (strain Agy99).